The chain runs to 357 residues: Guanine nucleotide-binding protein alpha-16 subunit (357 aa).

Residue Gly2 is the site of N-myristoyl glycine attachment. Residue Cys3 is the site of S-palmitoyl cysteine attachment. Positions 32–357 (RTIKLLLLGA…RDNLRTCGLY (326 aa)) constitute a G-alpha domain. The segment at 35 to 48 (KLLLLGAGESGKST) is G1 motif. GTP contacts are provided by residues 40–47 (GAGESGKS), 175–181 (LRTRIKT), 200–204 (DVGGQ), 269–272 (NKKD), and Ala329. Mg(2+) contacts are provided by Ser47 and Thr181. The tract at residues 173–181 (DILRTRIKT) is G2 motif. The interval 196 to 205 (FLVFDVGGQR) is G3 motif. The tract at residues 265–272 (ILFLNKKD) is G4 motif. Residues 327 to 332 (TCATDT) are G5 motif.

The protein belongs to the G-alpha family. G proteins are composed of 3 units; alpha, beta and gamma. The alpha chain contains the guanine nucleotide binding site.

In terms of biological role, guanine nucleotide-binding proteins (G proteins) are involved as modulators or transducers in various transmembrane signaling systems. In the 1-cell embryo, probably together with goa-1, controls nuclear rotation and spindle elongation during mitosis. During the first embryonic cell divisons, plays a role in gpr-1/2 cortical localization and in the proper orientation of EMS blastomere mitotic spindle. This Caenorhabditis elegans protein is Guanine nucleotide-binding protein alpha-16 subunit (gpa-16).